A 76-amino-acid polypeptide reads, in one-letter code: Protein RALF-like 30 (76 aa).

Positions 1–22 are cleaved as a signal peptide; the sequence is MKAWVICLMVISIFMMIEPTLA. Disulfide bonds link Cys-37/Cys-46 and Cys-66/Cys-72.

The protein belongs to the plant rapid alkalinization factor (RALF) family.

It is found in the secreted. In terms of biological role, cell signaling peptide that may regulate plant stress, growth, and development. Mediates a rapid alkalinization of extracellular space by mediating a transient increase in the cytoplasmic Ca(2+) concentration leading to a calcium-dependent signaling events through a cell surface receptor and a concomitant activation of some intracellular mitogen-activated protein kinases. In Arabidopsis thaliana (Mouse-ear cress), this protein is Protein RALF-like 30 (RALFL30).